An 864-amino-acid polypeptide reads, in one-letter code: Leucine--tRNA ligase (864 aa).

A 'HIGH' region motif is present at residues 42-52 (PYPSGKLHMGH). Positions 624 to 628 (KMSKS) match the 'KMSKS' region motif. An ATP-binding site is contributed by Lys-627.

The protein belongs to the class-I aminoacyl-tRNA synthetase family.

Its subcellular location is the cytoplasm. The catalysed reaction is tRNA(Leu) + L-leucine + ATP = L-leucyl-tRNA(Leu) + AMP + diphosphate. The sequence is that of Leucine--tRNA ligase from Burkholderia pseudomallei (strain 1106a).